We begin with the raw amino-acid sequence, 781 residues long: Poly(ADP-ribose) glycohydrolase 1 (781 aa).

3 disordered regions span residues A28–N87, S102–S131, and A206–S232. The segment covering V106–E121 has biased composition (basic and acidic residues).

The protein belongs to the poly(ADP-ribose) glycohydrolase family. As to expression, expressed in head and tail neurons. Also detected in the central nerve cord and motor neurons.

It localises to the nucleus. The catalysed reaction is [(1''-&gt;2')-ADP-alpha-D-ribose](n) + H2O = [(1''-&gt;2')-ADP-alpha-D-ribose](n-1) + ADP-D-ribose. Poly(ADP-ribose) synthesized after DNA damage is only present transiently and is rapidly degraded by poly(ADP-ribose) glycohydrolase. Poly(ADP-ribose) metabolism may be required for maintenance of the normal function of neuronal cells. The polypeptide is Poly(ADP-ribose) glycohydrolase 1 (Caenorhabditis elegans).